Consider the following 318-residue polypeptide: NAD kinase (318 aa).

The Proton acceptor role is filled by Asp80. NAD(+)-binding positions include 80 to 81 (DG), Arg85, 155 to 156 (NE), Asp185, and 196 to 201 (TAYAFS).

The protein belongs to the NAD kinase family. The cofactor is a divalent metal cation.

It localises to the cytoplasm. It carries out the reaction NAD(+) + ATP = ADP + NADP(+) + H(+). Functionally, involved in the regulation of the intracellular balance of NAD and NADP, and is a key enzyme in the biosynthesis of NADP. Catalyzes specifically the phosphorylation on 2'-hydroxyl of the adenosine moiety of NAD to yield NADP. The sequence is that of NAD kinase from Corynebacterium efficiens (strain DSM 44549 / YS-314 / AJ 12310 / JCM 11189 / NBRC 100395).